We begin with the raw amino-acid sequence, 429 residues long: Tyrosine--tRNA ligase (429 aa).

Position 36 (tyrosine 36) interacts with L-tyrosine. Positions 41 to 50 (PTAASLHAGH) match the 'HIGH' region motif. The L-tyrosine site is built by tyrosine 171 and glutamine 175. The 'KMSKS' region motif lies at 231–235 (KFGKS). Lysine 234 contributes to the ATP binding site. One can recognise an S4 RNA-binding domain in the interval 360-417 (ATIVDLLVATGLAESRGAARRTVNEGGAAVNNQKIADPDWTPADGDYLHGRWLVVRRG).

This sequence belongs to the class-I aminoacyl-tRNA synthetase family. TyrS type 1 subfamily. In terms of assembly, homodimer.

It is found in the cytoplasm. It carries out the reaction tRNA(Tyr) + L-tyrosine + ATP = L-tyrosyl-tRNA(Tyr) + AMP + diphosphate + H(+). Its function is as follows. Catalyzes the attachment of tyrosine to tRNA(Tyr) in a two-step reaction: tyrosine is first activated by ATP to form Tyr-AMP and then transferred to the acceptor end of tRNA(Tyr). This is Tyrosine--tRNA ligase from Nocardia farcinica (strain IFM 10152).